The primary structure comprises 94 residues: Small ribosomal subunit protein uS19 (94 aa).

It belongs to the universal ribosomal protein uS19 family.

In terms of biological role, protein S19 forms a complex with S13 that binds strongly to the 16S ribosomal RNA. In Acidobacterium capsulatum (strain ATCC 51196 / DSM 11244 / BCRC 80197 / JCM 7670 / NBRC 15755 / NCIMB 13165 / 161), this protein is Small ribosomal subunit protein uS19.